Reading from the N-terminus, the 212-residue chain is ER lumen protein-retaining receptor 2 (212 aa).

Residues 1–4 (MNVF) lie on the Lumenal side of the membrane. The chain crosses the membrane as a helical span at residues 5 to 24 (RLSGDLCHLAAIIILLLKIW). Over 25 to 32 (NSRSCAGI) the chain is Cytoplasmic. A helical transmembrane segment spans residues 33-52 (SGKSQLLFAMVFTTRYLDLF). The segment at 47-48 (RY) is interaction with the K-D-E-L motif on target proteins. The Lumenal segment spans residues 53–58 (TSFISL). The helical transmembrane segment at 59-79 (YNTSMKVIYMGCAYATVYLIY) threads the bilayer. At 80–92 (MKFKATYDGNHDT) the chain is on the cytoplasmic side. The chain crosses the membrane as a helical span at residues 93–110 (FRVEFLVVPVGGLSVLVN). At 111 to 116 (HDFSPL) the chain is on the lumenal side. Residues 117–135 (EILWTFSIYLESVAILPQL) traverse the membrane as a helical segment. Residues 136–149 (FMISKTGEAETITT) lie on the Cytoplasmic side of the membrane. A helical membrane pass occupies residues 150-168 (HYLFFLGLYRALYLFNWIW). The interaction with the K-D-E-L motif on target proteins stretch occupies residues 159 to 169 (RALYLFNWIWR). At 169–178 (RFSFEGFFDL) the chain is on the lumenal side. Residues 179–199 (IAIVAGVVQTILYCDFFYLYV) traverse the membrane as a helical segment. Over 200 to 212 (TKVLKGKKLSLPA) the chain is Cytoplasmic. The segment at 204–207 (KGKK) is important for recycling of cargo proteins with the sequence motif K-D-E-L from the Golgi to the endoplasmic reticulum.

This sequence belongs to the ERD2 family.

The protein resides in the endoplasmic reticulum membrane. It is found in the golgi apparatus membrane. Its subcellular location is the cytoplasmic vesicle. It localises to the COPI-coated vesicle membrane. Receptor for the C-terminal sequence motif K-D-E-L that is present on endoplasmic reticulum resident proteins and that mediates their recycling from the Golgi back to the endoplasmic reticulum. Binding is pH dependent, and is optimal at pH 5-5.4. In Xenopus laevis (African clawed frog), this protein is ER lumen protein-retaining receptor 2 (kdelr2).